A 245-amino-acid polypeptide reads, in one-letter code: Ribosomal RNA large subunit methyltransferase E (245 aa).

The segment at 1-26 (MTKPPVGSNRSGRKLGQKVKKGKLKA) is disordered. Residues 11-26 (SGRKLGQKVKKGKLKA) are compositionally biased toward basic residues. Positions 81, 83, 104, 120, and 144 each coordinate S-adenosyl-L-methionine. K184 serves as the catalytic Proton acceptor.

Belongs to the class I-like SAM-binding methyltransferase superfamily. RNA methyltransferase RlmE family.

It is found in the cytoplasm. It carries out the reaction uridine(2552) in 23S rRNA + S-adenosyl-L-methionine = 2'-O-methyluridine(2552) in 23S rRNA + S-adenosyl-L-homocysteine + H(+). In terms of biological role, specifically methylates the uridine in position 2552 of 23S rRNA at the 2'-O position of the ribose in the fully assembled 50S ribosomal subunit. The chain is Ribosomal RNA large subunit methyltransferase E from Sinorhizobium medicae (strain WSM419) (Ensifer medicae).